Consider the following 142-residue polypeptide: Regulatory protein RecX (142 aa).

The protein belongs to the RecX family.

Its subcellular location is the cytoplasm. Its function is as follows. Modulates RecA activity. The protein is Regulatory protein RecX of Thermus thermophilus (strain ATCC BAA-163 / DSM 7039 / HB27).